The sequence spans 140 residues: Nucleoside diphosphate kinase (140 aa).

The ATP site is built by Lys11, Phe59, Arg87, Thr93, Arg104, and Asn114. The active-site Pros-phosphohistidine intermediate is the His117.

Belongs to the NDK family. Homotetramer. Requires Mg(2+) as cofactor.

The protein resides in the cytoplasm. The catalysed reaction is a 2'-deoxyribonucleoside 5'-diphosphate + ATP = a 2'-deoxyribonucleoside 5'-triphosphate + ADP. The enzyme catalyses a ribonucleoside 5'-diphosphate + ATP = a ribonucleoside 5'-triphosphate + ADP. Functionally, major role in the synthesis of nucleoside triphosphates other than ATP. The ATP gamma phosphate is transferred to the NDP beta phosphate via a ping-pong mechanism, using a phosphorylated active-site intermediate. The chain is Nucleoside diphosphate kinase from Rhodospirillum centenum (strain ATCC 51521 / SW).